The sequence spans 689 residues: Methionine--tRNA ligase (689 aa).

A 'HIGH' region motif is present at residues 15–25 (PYANGPIHLGH). Residues C146, C149, C159, and C162 each contribute to the Zn(2+) site. The 'KMSKS' region signature appears at 332–336 (KMSKS). Residue K335 participates in ATP binding. The disordered stretch occupies residues 546–577 (KDNLQPTEAPKADKKADKKVEKKATTGDPLTD). Basic and acidic residues predominate over residues 555–570 (PKADKKADKKVEKKAT). In terms of domain architecture, tRNA-binding spans 588-689 (DFAKLDLRIA…QGAKPGMRVK (102 aa)).

It belongs to the class-I aminoacyl-tRNA synthetase family. MetG type 1 subfamily. Homodimer. Zn(2+) is required as a cofactor.

It is found in the cytoplasm. It carries out the reaction tRNA(Met) + L-methionine + ATP = L-methionyl-tRNA(Met) + AMP + diphosphate. Is required not only for elongation of protein synthesis but also for the initiation of all mRNA translation through initiator tRNA(fMet) aminoacylation. The polypeptide is Methionine--tRNA ligase (Shewanella denitrificans (strain OS217 / ATCC BAA-1090 / DSM 15013)).